We begin with the raw amino-acid sequence, 317 residues long: Succinate receptor 1 (317 aa).

The Extracellular portion of the chain corresponds to 1-27 (MAQNLSCENWLALENILKKYYLSAFYG). N-linked (GlcNAc...) asparagine glycosylation occurs at Asn4. The chain crosses the membrane as a helical span at residues 28–48 (IEFIVGMLGNFTVVFGYLFCM). Residues 49–55 (KNWNSSN) lie on the Cytoplasmic side of the membrane. A helical membrane pass occupies residues 56–76 (VYLFNLSISDLAFLCTLPMLI). The Extracellular segment spans residues 77–99 (RSYATGNWTYGDVLCISNRYVLH). The cysteines at positions 91 and 168 are disulfide-linked. The helical transmembrane segment at 100–120 (ANLYTSILFLTFISIDRYLLM) threads the bilayer. The Cytoplasmic portion of the chain corresponds to 121 to 133 (KFPFREHILQKKE). A helical transmembrane segment spans residues 134 to 154 (FAILISLAVWVLVTLEVLPML). Over 155–181 (TFITSTPIEKGDSCVDYASSGNPKYSL) the chain is Extracellular. A helical transmembrane segment spans residues 182-202 (IYSLCLTLLGFLIPLSVMCFF). The Cytoplasmic portion of the chain corresponds to 203–226 (YYKMVVFLKKRSQQQATVLSLNKP). The chain crosses the membrane as a helical span at residues 227 to 247 (LRLVVLAVVIFSVLFTPYHIM). Residues 248 to 276 (RNVRIASRLDSWPQGCSQKAIKCLYILTR) lie on the Extracellular side of the membrane. Residues 277 to 297 (PLAFLNSAVNPIFYFLVGDHF) form a helical membrane-spanning segment. Over 298–317 (RDMLFSKLRQYFKSLTSFRL) the chain is Cytoplasmic.

Belongs to the G-protein coupled receptor 1 family. As to expression, expressed in retina.

It is found in the cell membrane. Functionally, g protein-coupled receptor for succinate able to mediate signaling through Gq/GNAQ or Gi/GNAI second messengers depending on the cell type and the processes regulated. Succinate-SUCNR1 signaling serves as a link between metabolic stress, inflammation and energy homeostasisn. In macrophages, plays a range of immune-regulatory roles. During inflammation, succinate-SUCNR1 signaling may act as an anti-inflammatory mediator or boost inflammation depending on the inflammatory status of cells. Hyperpolarizes M2 macrophages versus M1 phenotype through Gq signaling by regulating the transcription of genes involved in immune function. In activated M1 macrophages, plays a pro-inflammatory role in response to LPS. Expressed in dendritic cells, where it is involved in the sensing of immunological danger and enhances immunity. Mediates succinate triggered intracelleular calcium mobilization, induces migratory responses and acts in synergy with Toll-like receptor ligands for the production of proinflammatory cytokines as well as an enhancement of antigen-specific activation of helper T cells. In the small intestine, mediates the activation of tuft cells by dietary succinate and triggers type 2 immunity. In adipocytes, plays an important role in the control of energy metabolism. In response to succinate, controls leptin expression in an AMPK-JNK-CEBPA-dependent as well as circadian clock-regulated manner. In muscle tissue, is expressed in non-muscle cells and coordinates muscle remodeling in response to the succinate produced during exercise training in a paracrine manner. In retina, acts as a mediator of vessel growth during retinal development. In response to succinate, regulates the production of angiogenic factors, including VEGF, by retinal ganglion neurons. This Rattus norvegicus (Rat) protein is Succinate receptor 1 (Sucnr1).